A 366-amino-acid polypeptide reads, in one-letter code: Chorismate synthase (366 aa).

R48 and R54 together coordinate NADP(+). FMN contacts are provided by residues 125 to 127 (RSS), 238 to 239 (NA), G278, 293 to 297 (KPTSS), and R319.

Belongs to the chorismate synthase family. As to quaternary structure, homotetramer. FMNH2 is required as a cofactor.

It catalyses the reaction 5-O-(1-carboxyvinyl)-3-phosphoshikimate = chorismate + phosphate. The protein operates within metabolic intermediate biosynthesis; chorismate biosynthesis; chorismate from D-erythrose 4-phosphate and phosphoenolpyruvate: step 7/7. Functionally, catalyzes the anti-1,4-elimination of the C-3 phosphate and the C-6 proR hydrogen from 5-enolpyruvylshikimate-3-phosphate (EPSP) to yield chorismate, which is the branch point compound that serves as the starting substrate for the three terminal pathways of aromatic amino acid biosynthesis. This reaction introduces a second double bond into the aromatic ring system. The polypeptide is Chorismate synthase (Ralstonia nicotianae (strain ATCC BAA-1114 / GMI1000) (Ralstonia solanacearum)).